A 508-amino-acid chain; its full sequence is Argininosuccinate lyase (508 aa).

The protein belongs to the lyase 1 family. Argininosuccinate lyase subfamily.

It localises to the cytoplasm. The enzyme catalyses 2-(N(omega)-L-arginino)succinate = fumarate + L-arginine. The protein operates within amino-acid biosynthesis; L-arginine biosynthesis; L-arginine from L-ornithine and carbamoyl phosphate: step 3/3. The protein is Argininosuccinate lyase of Methanopyrus kandleri (strain AV19 / DSM 6324 / JCM 9639 / NBRC 100938).